The sequence spans 992 residues: UPF0182 protein BCG_3215c (992 aa).

A run of 7 helical transmembrane segments spans residues 18–38 (ILIMIALGVIVLLLAGPRLID), 63–83 (IVVCLVAGVVVGGIVFGGLAL), 113–133 (LVGIGIPAAIGLLAGIVAQSY), 175–195 (LVSVFLAFVANLVAHYIFGGI), 210–230 (VQLVSLVGVLVLLKAVAYWLD), 259–279 (KLILMAIALICAAAVFSAIAL), and 287–307 (IGLVLLLLSSLIVGAGWPLIV). The disordered stretch occupies residues 906–938 (PTEAAVPPSPAANPPPPASGPQPPPVTAAPPVP). Positions 912 to 938 (PPSPAANPPPPASGPQPPPVTAAPPVP) are enriched in pro residues.

Belongs to the UPF0182 family.

It localises to the cell membrane. The sequence is that of UPF0182 protein BCG_3215c from Mycobacterium bovis (strain BCG / Pasteur 1173P2).